A 416-amino-acid polypeptide reads, in one-letter code: Calreticulin (416 aa).

An N-terminal signal peptide occupies residues Met1 to Ala25. N-linked (GlcNAc...) asparagine glycosylation occurs at Asn57. A disulfide bond links Cys111 and Cys143. Residues Tyr115, Lys117, Tyr134, and Asp141 each coordinate an alpha-D-glucoside. Asn157 carries N-linked (GlcNAc...) asparagine glycosylation. 7 consecutive repeat copies span residues Lys197–Leu208, Asp216–Asp227, Asp233–Asp244, Asp251–Asp262, Gly266–Pro276, Gly280–Pro290, and Gly294–Pro304. A 4 X approximate repeats region spans residues Lys197 to Asp262. A compositionally biased stretch (basic and acidic residues) spans Pro217–Gly241. The disordered stretch occupies residues Pro217 to Pro281. Residues Gly266 to Pro304 are 3 X approximate repeats. An an alpha-D-glucoside-binding site is contributed by Glu324. The segment covering Glu351 to Pro381 has biased composition (basic and acidic residues). Residues Glu351–Leu416 form a disordered region. The span at Val382 to Asp400 shows a compositional bias: acidic residues. Residues Asp401–Leu416 are compositionally biased toward basic and acidic residues. A Prevents secretion from ER motif is present at residues His413–Leu416.

It belongs to the calreticulin family.

The protein resides in the endoplasmic reticulum lumen. In terms of biological role, molecular calcium-binding chaperone promoting folding, oligomeric assembly and quality control in the ER via the calreticulin/calnexin cycle. This lectin may interact transiently with almost all of the monoglucosylated glycoproteins that are synthesized in the ER. The polypeptide is Calreticulin (Beta vulgaris (Sugar beet)).